A 504-amino-acid chain; its full sequence is Ribonuclease Y (504 aa).

One can recognise a KH domain in the interval 194 to 279; sequence TVHVVSLPND…EMVEKAKQEV (86 aa). An HD domain is found at 320–413; the sequence is VLKHSMEVAY…VQAADAISAA (94 aa).

It belongs to the RNase Y family.

Endoribonuclease that initiates mRNA decay. This is Ribonuclease Y from Clostridium novyi (strain NT).